A 497-amino-acid chain; its full sequence is Serine carboxypeptidase-like 20 (497 aa).

The first 29 residues, 1–29 (MSIITMVWLMKVFVFVTLLSLVFVITESA), serve as a signal peptide directing secretion. 3 disulfide bridges follow: Cys-90-Cys-386, Cys-254-Cys-266, and Cys-289-Cys-353. Asn-111 and Asn-146 each carry an N-linked (GlcNAc...) asparagine glycan. The active site involves Ser-186. Residue Asn-249 is glycosylated (N-linked (GlcNAc...) asparagine). Asn-405 is a glycosylation site (N-linked (GlcNAc...) asparagine). Asp-421 is an active-site residue. N-linked (GlcNAc...) asparagine glycosylation occurs at Asn-463. His-474 is an active-site residue. Positions 495–497 (SKI) match the Microbody targeting signal motif.

It belongs to the peptidase S10 family. In terms of tissue distribution, ubiquitous.

It localises to the secreted. In terms of biological role, probable carboxypeptidase. The protein is Serine carboxypeptidase-like 20 (SCPL20) of Arabidopsis thaliana (Mouse-ear cress).